We begin with the raw amino-acid sequence, 417 residues long: Tryptophan synthase beta chain (417 aa).

Lys-110 is modified (N6-(pyridoxal phosphate)lysine).

It belongs to the TrpB family. In terms of assembly, tetramer of two alpha and two beta chains. Requires pyridoxal 5'-phosphate as cofactor.

The enzyme catalyses (1S,2R)-1-C-(indol-3-yl)glycerol 3-phosphate + L-serine = D-glyceraldehyde 3-phosphate + L-tryptophan + H2O. Its pathway is amino-acid biosynthesis; L-tryptophan biosynthesis; L-tryptophan from chorismate: step 5/5. The beta subunit is responsible for the synthesis of L-tryptophan from indole and L-serine. This chain is Tryptophan synthase beta chain, found in Prochlorococcus marinus (strain NATL1A).